The sequence spans 118 residues: NADH-quinone oxidoreductase subunit A (118 aa).

Helical transmembrane passes span 5-25 (YLGI…AFAV), 61-81 (FLYA…YPWA), and 90-110 (FAIV…WYAW).

It belongs to the complex I subunit 3 family. NDH-1 is composed of 14 different subunits. Subunits NuoA, H, J, K, L, M, N constitute the membrane sector of the complex.

The protein resides in the cell membrane. The catalysed reaction is a quinone + NADH + 5 H(+)(in) = a quinol + NAD(+) + 4 H(+)(out). Its function is as follows. NDH-1 shuttles electrons from NADH, via FMN and iron-sulfur (Fe-S) centers, to quinones in the respiratory chain. The immediate electron acceptor for the enzyme in this species is believed to be a menaquinone. Couples the redox reaction to proton translocation (for every two electrons transferred, four hydrogen ions are translocated across the cytoplasmic membrane), and thus conserves the redox energy in a proton gradient. The sequence is that of NADH-quinone oxidoreductase subunit A from Heliobacterium modesticaldum (strain ATCC 51547 / Ice1).